The chain runs to 83 residues: Homeobox protein DLX-2 (83 aa).

Positions 1–14 are enriched in polar residues; the sequence is STATDSSYYTNQQH. Disordered stretches follow at residues 1–27 and 63–83; these read STAT…SPYA and PYGT…LEPE.

It belongs to the distal-less homeobox family. In terms of assembly, interacts (via homeobox DNA-binding domain) with POU4F2; this interaction enhances retinal ganglion cell (RGC) differentiation.

It localises to the nucleus. Acts as a transcriptional activator. Activates transcription of CGA/alpha-GSU, via binding to the downstream activin regulatory element (DARE) in the gene promoter. Plays a role in terminal differentiation of interneurons, such as amacrine and bipolar cells in the developing retina. Likely to play a regulatory role in the development of the ventral forebrain. May play a role in craniofacial patterning and morphogenesis. The polypeptide is Homeobox protein DLX-2 (Dlx2) (Rattus norvegicus (Rat)).